Here is a 346-residue protein sequence, read N- to C-terminus: D-fructose 1,6-bisphosphatase class 2/sedoheptulose 1,7-bisphosphatase 1 (346 aa).

Residues Asp33, Glu57, Asp97, and Glu100 each coordinate Mn(2+). Substrate is bound by residues 100 to 102, Tyr131, 176 to 178, and 198 to 200; these read EGT, RAR, and DGD. Glu225 contacts Mn(2+).

This sequence belongs to the FBPase class 2 family. Homotetramer. It depends on Mn(2+) as a cofactor.

The enzyme catalyses beta-D-fructose 1,6-bisphosphate + H2O = beta-D-fructose 6-phosphate + phosphate. It carries out the reaction D-sedoheptulose 1,7-bisphosphate + H2O = D-sedoheptulose 7-phosphate + phosphate. The protein operates within carbohydrate biosynthesis; Calvin cycle. In terms of biological role, catalyzes the hydrolysis of fructose 1,6-bisphosphate (Fru 1,6-P2) and sedoheptulose 1,7-bisphosphate (Sed 1,7-P2) to fructose 6-phosphate and sedoheptulose 7-phosphate, respectively. The protein is D-fructose 1,6-bisphosphatase class 2/sedoheptulose 1,7-bisphosphatase 1 of Acaryochloris marina (strain MBIC 11017).